The primary structure comprises 276 residues: Large ribosomal subunit protein uL2 (276 aa).

Disordered stretches follow at residues 30-57 (EKSL…QGGG) and 219-276 (TVRG…RSKK).

This sequence belongs to the universal ribosomal protein uL2 family. Part of the 50S ribosomal subunit. Forms a bridge to the 30S subunit in the 70S ribosome.

In terms of biological role, one of the primary rRNA binding proteins. Required for association of the 30S and 50S subunits to form the 70S ribosome, for tRNA binding and peptide bond formation. It has been suggested to have peptidyltransferase activity; this is somewhat controversial. Makes several contacts with the 16S rRNA in the 70S ribosome. This is Large ribosomal subunit protein uL2 from Exiguobacterium sibiricum (strain DSM 17290 / CCUG 55495 / CIP 109462 / JCM 13490 / 255-15).